The sequence spans 365 residues: Cytosolic 5'-nucleotidase 1A (365 aa).

The span at 1–11 (MEPGQPREARE) shows a compositional bias: basic and acidic residues. Residues 1 to 23 (MEPGQPREAREPGPGAETAAVPR) form a disordered region. Residue aspartate 208 is the Nucleophile of the active site.

This sequence belongs to the 5'-nucleotidase type 3 family. The cofactor is Mg(2+).

It localises to the cytoplasm. The catalysed reaction is a ribonucleoside 5'-phosphate + H2O = a ribonucleoside + phosphate. It carries out the reaction a 2'-deoxyribonucleoside 5'-phosphate + H2O = a 2'-deoxyribonucleoside + phosphate. It catalyses the reaction IMP + H2O = inosine + phosphate. The enzyme catalyses AMP + H2O = adenosine + phosphate. The catalysed reaction is dCMP + H2O = 2'-deoxycytidine + phosphate. With respect to regulation, activated by ADP. Functionally, catalyzes the hydrolysis of ribonucleotide and deoxyribonucleotide monophosphates, releasing inorganic phosphate and the corresponding nucleoside. AMP is the major substrate but can also hydrolyze dCMP and IMP. The chain is Cytosolic 5'-nucleotidase 1A (Nt5c1a) from Mus musculus (Mouse).